A 139-amino-acid polypeptide reads, in one-letter code: Large-conductance mechanosensitive channel (139 aa).

Helical transmembrane passes span 9–29 (AFAV…GAAF) and 79–99 (IQSV…VKAI).

This sequence belongs to the MscL family. Homopentamer.

It localises to the cell inner membrane. Its function is as follows. Channel that opens in response to stretch forces in the membrane lipid bilayer. May participate in the regulation of osmotic pressure changes within the cell. The chain is Large-conductance mechanosensitive channel from Pseudomonas fluorescens (strain SBW25).